The primary structure comprises 250 residues: Bacteriorhodopsin-II (250 aa).

The next 7 membrane-spanning stretches (helical) occupy residues 14–34, 49–69, 89–109, 114–134, 142–162, 183–203, and 210–230; these read EGIW…YFMA, VITI…FFGF, YADW…LAGA, MASL…ATLM, AFWT…VVVV, IILV…EGLG, and ETLL…FILL. The residue at position 222 (lysine 222) is an N6-(retinylidene)lysine.

Belongs to the archaeal/bacterial/fungal opsin family. The covalent binding of retinal to the apoprotein, bacterioopsin, generates bacteriorhodopsin.

The protein localises to the membrane. Its function is as follows. Light-driven proton pump. In Haloarcula marismortui (strain ATCC 43049 / DSM 3752 / JCM 8966 / VKM B-1809) (Halobacterium marismortui), this protein is Bacteriorhodopsin-II (xop1).